The sequence spans 223 residues: Ribonuclease T (223 aa).

An Exonuclease domain is found at 20–194; that stretch reads VVIDVETAGF…YDTERTAELF (175 aa). Mg(2+) contacts are provided by D23, E25, H181, and D186. H181 functions as the Proton donor/acceptor in the catalytic mechanism.

The protein belongs to the RNase T family. As to quaternary structure, homodimer. Mg(2+) serves as cofactor.

Functionally, trims short 3' overhangs of a variety of RNA species, leaving a one or two nucleotide 3' overhang. Responsible for the end-turnover of tRNA: specifically removes the terminal AMP residue from uncharged tRNA (tRNA-C-C-A). Also appears to be involved in tRNA biosynthesis. This chain is Ribonuclease T, found in Shewanella baltica (strain OS185).